A 299-amino-acid chain; its full sequence is Glutamate formimidoyltransferase (299 aa).

His82 functions as the For formimidoyltransferase activity in the catalytic mechanism. 163–172 (GDRKIHPTAG) lines the folate pocket.

This sequence belongs to the formiminotransferase family.

Its subcellular location is the cytoplasm. It carries out the reaction (6S)-5-formyl-5,6,7,8-tetrahydrofolate + L-glutamate = N-formyl-L-glutamate + (6S)-5,6,7,8-tetrahydrofolate + H(+). The enzyme catalyses 5-formimidoyltetrahydrofolate + L-glutamate = N-formimidoyl-L-glutamate + (6S)-5,6,7,8-tetrahydrofolate. The catalysed reaction is (6S)-5-formyl-5,6,7,8-tetrahydrofolate + ATP = (6R)-5,10-methenyltetrahydrofolate + ADP + phosphate. It functions in the pathway amino-acid degradation; L-histidine degradation into L-glutamate; L-glutamate from N-formimidoyl-L-glutamate (transferase route): step 1/1. The protein operates within one-carbon metabolism; tetrahydrofolate interconversion. Its function is as follows. Catalyzes the transfer of the formyl group from N-formylglutamate to tetrahydrofolate (THF) to yield 5-formyltetrahydrofolate (5-CHO-THF) and glutamate (Glu). The triglutamate form of 5-CHO-THF (5-CHO-THF-Glu3) can also be used as substrate. It can also catalyze the transfer of the formimino group from N-formiminoglutamate to tetrahydrofolate (THF) to yield 5-formiminotetrahydrofolate (5-NH=CH-THF) and glutamate (Glu). It can replace YgfA to catalyze the irreversible ATP-dependent transformation of 5-CHO-THF to form 5,10-methenyltetrahydrofolate (5,10-CH=THF). The polypeptide is Glutamate formimidoyltransferase (Streptococcus pyogenes serotype M1).